Reading from the N-terminus, the 347-residue chain is Beta-hexosaminidase (347 aa).

Substrate-binding positions include aspartate 64, arginine 72, arginine 138, and 168–169 (KH). The active-site Proton donor/acceptor is histidine 181. Residue aspartate 251 is the Nucleophile of the active site.

This sequence belongs to the glycosyl hydrolase 3 family. NagZ subfamily.

The protein localises to the cytoplasm. The enzyme catalyses Hydrolysis of terminal non-reducing N-acetyl-D-hexosamine residues in N-acetyl-beta-D-hexosaminides.. The protein operates within cell wall biogenesis; peptidoglycan recycling. Plays a role in peptidoglycan recycling by cleaving the terminal beta-1,4-linked N-acetylglucosamine (GlcNAc) from peptide-linked peptidoglycan fragments, giving rise to free GlcNAc, anhydro-N-acetylmuramic acid and anhydro-N-acetylmuramic acid-linked peptides. The polypeptide is Beta-hexosaminidase (Thioalkalivibrio sulfidiphilus (strain HL-EbGR7)).